The sequence spans 607 residues: MSIRLLPPTLVNQIAAGEVVERPASAVKELVENAIDAGASRIDVVLAEGGQSLIAVSDDGCGMSPDEMMLAVERHATSKLPDDDLVRIRFLGFRGEALPSIGSVARLTLTSRPRGADSAWSLSVEGGAKGRPVPAAHPQGTRIEVRDLFYATPARLKFLKAARTELTHAADVIERLGMAHPDIAFSLSDGGRKVLDLAAKRGEPGAALLSRIAQVVGREFEPNALALDAERDGVRLTGWAGLPTYNRATSAAQYLFVNGRPVKDRLVIGAVRGAYQDVLARDRHPVVALFLELDPDQVDVNVHPAKAEVRFRDSGLVRGLIVGAIRHALAGAGHRASSTLTGVALGALGGGGGNSPPPSFAHYPPPRPSLPLIRAGIGAQAPLGLAEQGLGLHLPPAAPVAPPEAREGPGEASVDYPLGAAKAQLHDTYIVAETADGLVIVDQHAAHERLVFERLKLGLTEGQVARQGLLLPEVVDLGDAGAARVTERAGDLARLGLVIDSFGPGAVVVREVPALLGDDDVQGLVRDLADELAEWGASTVLEERLLHICATMACHGSVRAGRRLSVPEMNALLRRMEATPLSGQCNHGRPTHVSLSLNDIEKLFGRR.

The protein belongs to the DNA mismatch repair MutL/HexB family.

Functionally, this protein is involved in the repair of mismatches in DNA. It is required for dam-dependent methyl-directed DNA mismatch repair. May act as a 'molecular matchmaker', a protein that promotes the formation of a stable complex between two or more DNA-binding proteins in an ATP-dependent manner without itself being part of a final effector complex. The chain is DNA mismatch repair protein MutL from Paramagnetospirillum magneticum (strain ATCC 700264 / AMB-1) (Magnetospirillum magneticum).